Reading from the N-terminus, the 363-residue chain is Ribosome-binding ATPase YchF (363 aa).

The OBG-type G domain occupies 3–256 (FKCGIVGLPN…LDDDEKIEFL (254 aa)). Residue 12 to 17 (NVGKST) coordinates ATP. 2 residues coordinate Mg(2+): serine 16 and threonine 36. Residues 278 to 361 (NLQTYFTAGV…QDGDVMHFRF (84 aa)) enclose the TGS domain.

This sequence belongs to the TRAFAC class OBG-HflX-like GTPase superfamily. OBG GTPase family. YchF/OLA1 subfamily. Requires Mg(2+) as cofactor.

ATPase that binds to both the 70S ribosome and the 50S ribosomal subunit in a nucleotide-independent manner. This is Ribosome-binding ATPase YchF from Pasteurella multocida (strain Pm70).